The sequence spans 152 residues: Ribosome maturation factor RimP (152 aa).

The protein belongs to the RimP family.

The protein localises to the cytoplasm. Functionally, required for maturation of 30S ribosomal subunits. The protein is Ribosome maturation factor RimP of Aeromonas hydrophila subsp. hydrophila (strain ATCC 7966 / DSM 30187 / BCRC 13018 / CCUG 14551 / JCM 1027 / KCTC 2358 / NCIMB 9240 / NCTC 8049).